The chain runs to 424 residues: Probable ribonuclease FAU-1 (424 aa).

The protein belongs to the FAU-1 family.

Functionally, probable RNase involved in rRNA stability through maturation and/or degradation of precursor rRNAs. Binds to RNA in loop regions with AU-rich sequences. This chain is Probable ribonuclease FAU-1, found in Saccharolobus islandicus (strain Y.G.57.14 / Yellowstone #1) (Sulfolobus islandicus).